The primary structure comprises 758 residues: 5-methyltetrahydropteroyltriglutamate--homocysteine methyltransferase (758 aa).

5-methyltetrahydropteroyltri-L-glutamate is bound by residues 15–18 (RELK) and Lys114. L-homocysteine-binding positions include 433–435 (IGS) and Glu486. Residues 433-435 (IGS) and Glu486 contribute to the L-methionine site. 5-methyltetrahydropteroyltri-L-glutamate is bound by residues 517–518 (RC) and Trp563. Asp601 contacts L-homocysteine. L-methionine is bound at residue Asp601. Glu607 lines the 5-methyltetrahydropteroyltri-L-glutamate pocket. Zn(2+) contacts are provided by His643, Cys645, and Glu667. Catalysis depends on His696, which acts as the Proton donor. Cys728 contacts Zn(2+).

It belongs to the vitamin-B12 independent methionine synthase family. Requires Zn(2+) as cofactor.

The enzyme catalyses 5-methyltetrahydropteroyltri-L-glutamate + L-homocysteine = tetrahydropteroyltri-L-glutamate + L-methionine. It functions in the pathway amino-acid biosynthesis; L-methionine biosynthesis via de novo pathway; L-methionine from L-homocysteine (MetE route): step 1/1. Functionally, catalyzes the transfer of a methyl group from 5-methyltetrahydrofolate to homocysteine resulting in methionine formation. This chain is 5-methyltetrahydropteroyltriglutamate--homocysteine methyltransferase, found in Syntrophotalea carbinolica (strain DSM 2380 / NBRC 103641 / GraBd1) (Pelobacter carbinolicus).